The following is a 220-amino-acid chain: Deoxyribose-phosphate aldolase (220 aa).

The active-site Proton donor/acceptor is the Asp89. Lys151 acts as the Schiff-base intermediate with acetaldehyde in catalysis. Lys180 (proton donor/acceptor) is an active-site residue.

The protein belongs to the DeoC/FbaB aldolase family. DeoC type 1 subfamily.

Its subcellular location is the cytoplasm. It catalyses the reaction 2-deoxy-D-ribose 5-phosphate = D-glyceraldehyde 3-phosphate + acetaldehyde. It functions in the pathway carbohydrate degradation; 2-deoxy-D-ribose 1-phosphate degradation; D-glyceraldehyde 3-phosphate and acetaldehyde from 2-deoxy-alpha-D-ribose 1-phosphate: step 2/2. Its function is as follows. Catalyzes a reversible aldol reaction between acetaldehyde and D-glyceraldehyde 3-phosphate to generate 2-deoxy-D-ribose 5-phosphate. This is Deoxyribose-phosphate aldolase from Staphylococcus carnosus (strain TM300).